We begin with the raw amino-acid sequence, 125 residues long: Small ribosomal subunit protein uS11 (125 aa).

The interval 101-125 is disordered; the sequence is KDVKDVTPTPHNGTRPPKKILKREK. The span at 116 to 125 shows a compositional bias: basic residues; it reads PPKKILKREK.

The protein belongs to the universal ribosomal protein uS11 family. As to quaternary structure, part of the 30S ribosomal subunit. Interacts with proteins S7 and S18. Binds to IF-3.

Its function is as follows. Located on the platform of the 30S subunit, it bridges several disparate RNA helices of the 16S rRNA. Forms part of the Shine-Dalgarno cleft in the 70S ribosome. The sequence is that of Small ribosomal subunit protein uS11 from Mycoplasma sp.